A 134-amino-acid polypeptide reads, in one-letter code: Profilin-1 (134 aa).

Residues Cys13 and Cys118 are joined by a disulfide bond. An Involved in PIP2 interaction motif is present at residues 84–100 (AVIRGKKGSGGITIKKT). The residue at position 114 (Thr114) is a Phosphothreonine.

The protein belongs to the profilin family. Occurs in many kinds of cells as a complex with monomeric actin in a 1:1 ratio. Phosphorylated by MAP kinases.

It localises to the cytoplasm. It is found in the cytoskeleton. In terms of biological role, binds to actin and affects the structure of the cytoskeleton. At high concentrations, profilin prevents the polymerization of actin, whereas it enhances it at low concentrations. The polypeptide is Profilin-1 (Olea europaea (Common olive)).